Here is a 496-residue protein sequence, read N- to C-terminus: Glutamyl-tRNA(Gln) amidotransferase subunit A (496 aa).

Active-site charge relay system residues include lysine 79 and serine 159. Serine 183 functions as the Acyl-ester intermediate in the catalytic mechanism.

Belongs to the amidase family. GatA subfamily. As to quaternary structure, heterotrimer of A, B and C subunits.

It carries out the reaction L-glutamyl-tRNA(Gln) + L-glutamine + ATP + H2O = L-glutaminyl-tRNA(Gln) + L-glutamate + ADP + phosphate + H(+). Allows the formation of correctly charged Gln-tRNA(Gln) through the transamidation of misacylated Glu-tRNA(Gln) in organisms which lack glutaminyl-tRNA synthetase. The reaction takes place in the presence of glutamine and ATP through an activated gamma-phospho-Glu-tRNA(Gln). The sequence is that of Glutamyl-tRNA(Gln) amidotransferase subunit A from Bartonella quintana (strain Toulouse) (Rochalimaea quintana).